Reading from the N-terminus, the 321-residue chain is Glucokinase (321 aa).

8 to 13 provides a ligand contact to ATP; sequence GDVGGT.

This sequence belongs to the bacterial glucokinase family.

It localises to the cytoplasm. The catalysed reaction is D-glucose + ATP = D-glucose 6-phosphate + ADP + H(+). This chain is Glucokinase, found in Shigella flexneri serotype 5b (strain 8401).